The sequence spans 110 residues: UPF0102 protein Abu_0255 (110 aa).

Belongs to the UPF0102 family.

This is UPF0102 protein Abu_0255 from Aliarcobacter butzleri (strain RM4018) (Arcobacter butzleri).